We begin with the raw amino-acid sequence, 361 residues long: 4-oxalomesaconate tautomerase (361 aa).

This sequence belongs to the PrpF family.

The catalysed reaction is (1E)-4-oxobut-1-ene-1,2,4-tricarboxylate = 4-carboxy-2-hydroxy-cis,cis-muconate. Its function is as follows. Catalyzes the tautomerization of the 4-oxalomesaconic acid keto (OMAketo) generated by GalA dioxygenase to 4-oxalomesaconic acid enol (OMAenol). Mediates the second step in gallate degradation pathway. The chain is 4-oxalomesaconate tautomerase (galD) from Pseudomonas putida (strain ATCC 47054 / DSM 6125 / CFBP 8728 / NCIMB 11950 / KT2440).